The primary structure comprises 331 residues: 3-dehydrosphinganine reductase TSC10B (331 aa).

The Lumenal portion of the chain corresponds to 1 to 7 (MAAIFSL). The chain crosses the membrane as a helical span at residues 8-28 (FLFFILFIVSLLIILSFIVRP). Over 29 to 262 (RSVTIPIKFR…ICFDGIKAGK (234 aa)) the chain is Cytoplasmic. Residues glycine 44, serine 46, serine 47, glycine 48, arginine 69, lysine 73, and aspartate 95 each contribute to the NADPH site. Positions 44 to 48 (GGSSG) match the GXSXG motif. Serine 172 functions as the Proton donor in the catalytic mechanism. Tyrosine 186 functions as the Proton acceptor in the catalytic mechanism. Positions 186 and 190 each coordinate NADP(+). Lysine 190 serves as the catalytic Lowers pKa of active site Tyr. The helical transmembrane segment at 263 to 283 (FTVTCHFIGFLLSIASTGMSP) threads the bilayer. Over 284 to 286 (QGS) the chain is Lumenal. The helical transmembrane segment at 287–307 (FWLALTEVMFGGLIRLASLVF) threads the bilayer. Over 308 to 331 (QWQWYKTIEKWSQRNKKEVNSKLA) the chain is Cytoplasmic.

The protein belongs to the short-chain dehydrogenases/reductases (SDR) family. Expressed in roots, leaves, stems and flowers.

It is found in the endoplasmic reticulum membrane. It carries out the reaction sphinganine + NADP(+) = 3-oxosphinganine + NADPH + H(+). The protein operates within lipid metabolism; sphingolipid metabolism. Catalyzes the reduction of 3'-oxosphinganine (3-ketodihydrosphingosine/KDS) to sphinganine (dihydrosphingosine/DHS), the second step of de novo sphingolipid biosynthesis. In plants, sphingolipids seems to play a critical role in mineral ion homeostasis, most likely through their involvement in the ion transport functionalities of membrane systems in the root. Is stereospecific for D-erythro-DHS production and does not produce L-threo-DHS. The polypeptide is 3-dehydrosphinganine reductase TSC10B (TSC10B) (Arabidopsis thaliana (Mouse-ear cress)).